The following is a 156-amino-acid chain: Small ribosomal subunit protein uS7 (156 aa).

It belongs to the universal ribosomal protein uS7 family. In terms of assembly, part of the 30S ribosomal subunit. Contacts proteins S9 and S11.

One of the primary rRNA binding proteins, it binds directly to 16S rRNA where it nucleates assembly of the head domain of the 30S subunit. Is located at the subunit interface close to the decoding center, probably blocks exit of the E-site tRNA. This is Small ribosomal subunit protein uS7 from Shewanella halifaxensis (strain HAW-EB4).